Reading from the N-terminus, the 278-residue chain is MSRIQTRFAALKREGRGALIPFIEAGDPDAETSQTLLHGLPAAGADLIEIGVPFTDPMADGPTIQRAGRRALEAGATLAKTLAMVETFRQQDKDTPIILMGYLNPIETYGHERFCVDAAAVGVDGLIIVDLPTEEADLILPFATANGLDVIRLVAPTTDDARLPHVLNGSSGFVYYVSITGITGTVTASAEQLAQNMPRLRRVTDLPVAIGFGIRNPAQAAEAVRQGDAAIVASALIDTLAETLDDGRATDRTVPAVLDQVRQLAEAVRSARLSARGA.

Residues glutamate 49 and aspartate 60 each act as proton acceptor in the active site.

This sequence belongs to the TrpA family. Tetramer of two alpha and two beta chains.

The catalysed reaction is (1S,2R)-1-C-(indol-3-yl)glycerol 3-phosphate + L-serine = D-glyceraldehyde 3-phosphate + L-tryptophan + H2O. The protein operates within amino-acid biosynthesis; L-tryptophan biosynthesis; L-tryptophan from chorismate: step 5/5. In terms of biological role, the alpha subunit is responsible for the aldol cleavage of indoleglycerol phosphate to indole and glyceraldehyde 3-phosphate. This is Tryptophan synthase alpha chain from Granulibacter bethesdensis (strain ATCC BAA-1260 / CGDNIH1).